The primary structure comprises 1121 residues: CRISPR-associated endonuclease Cas9 1 (1121 aa).

Catalysis depends on Asp9, which acts as the For RuvC-like nuclease domain. Mg(2+) is bound by residues Asp9, Glu509, and Glu513. The region spanning 516-684 is the HNH Cas9-type domain; the sequence is EDDEKKAIQK…VRKKFIERNL (169 aa). The Proton acceptor for HNH nuclease domain role is filled by His599. His738 is a binding site for Mg(2+).

It belongs to the CRISPR-associated protein Cas9 family. Subtype II-A subfamily. Monomer. Binds crRNA and tracrRNA. It depends on Mg(2+) as a cofactor.

Its function is as follows. CRISPR (clustered regularly interspaced short palindromic repeat) is an adaptive immune system that provides protection against mobile genetic elements (viruses, transposable elements and conjugative plasmids). CRISPR clusters contain spacers, sequences complementary to antecedent mobile elements, and target invading nucleic acids. CRISPR clusters are transcribed and processed into CRISPR RNA (crRNA). In type II CRISPR systems correct processing of pre-crRNA requires a trans-encoded small RNA (tracrRNA), endogenous ribonuclease 3 (rnc) and this protein. The tracrRNA serves as a guide for ribonuclease 3-aided processing of pre-crRNA. Subsequently Cas9/crRNA/tracrRNA endonucleolytically cleaves linear or circular dsDNA target complementary to the spacer; Cas9 is inactive in the absence of the 2 guide RNAs (gRNA). Cas9 recognizes the protospacer adjacent motif (PAM) in the CRISPR repeat sequences to help distinguish self versus nonself, as targets within the bacterial CRISPR locus do not have PAMs. PAM recognition is also required for catalytic activity. Cuts target DNA when Cas9 and gRNAs are mixed. The chain is CRISPR-associated endonuclease Cas9 1 from Streptococcus thermophilus (strain ATCC BAA-491 / LMD-9).